Consider the following 170-residue polypeptide: uncharacterized protein (170 aa).

This is an uncharacterized protein from Archaeoglobus fulgidus (strain ATCC 49558 / DSM 4304 / JCM 9628 / NBRC 100126 / VC-16).